Consider the following 569-residue polypeptide: Peroxynitrite isomerase THAP4 (569 aa).

A THAP-type zinc finger spans residues 1-85 (MVICCAAVNC…LKPTAVPSIF (85 aa)). Residues 83–219 (SIFHLSEKKR…GISMDDFTPP (137 aa)) are disordered. Positions 121–130 (IGSSLSSSDN) are enriched in polar residues. Residue Ser-159 is modified to Phosphoserine. Low complexity predominate over residues 196–210 (ASSSAADAGGADKSG). Positions 230 to 233 (LHSY) match the HCFC1-binding motif (HBM) motif. Residue Ser-234 is modified to Phosphoserine. The interval 235-312 (FSSKHTRERP…EAVQSEHSDA (78 aa)) is disordered. The span at 242-262 (ERPSVPREPMDRKRLKRDIEP) shows a compositional bias: basic and acidic residues. Residues 265 to 279 (SGNSVAQSPPSSSLT) are compositionally biased toward polar residues. Residues 280-289 (ATPQKASQSP) show a composition bias toward low complexity. The nitrobindin stretch occupies residues 407-569 (PPKLNPVVEP…LHITYKKVTP (163 aa)). 2 residues coordinate heme b: Thr-436 and His-559.

The protein in the C-terminal section; belongs to the nitrobindin family. As to quaternary structure, homodimer. The cofactor is heme b.

It is found in the cytoplasm. Its subcellular location is the nucleus. It catalyses the reaction peroxynitrite = nitrate. It functions in the pathway nitrogen metabolism. Heme-binding protein able to scavenge peroxynitrite and to protect free L-tyrosine against peroxynitrite-mediated nitration, by acting as a peroxynitrite isomerase that converts peroxynitrite to nitrate. Therefore, this protein likely plays a role in peroxynitrite sensing and in the detoxification of reactive nitrogen and oxygen species (RNS and ROS, respectively). Is able to bind nitric oxide (NO) in vitro, but may act as a sensor of peroxynitrite levels in vivo, possibly modulating the transcriptional activity residing in the N-terminal region. The protein is Peroxynitrite isomerase THAP4 of Rattus norvegicus (Rat).